The sequence spans 240 residues: uncharacterized protein (240 aa).

The N-terminal stretch at 1-17 (MRMAFMLLALLFSFRNA) is a signal peptide.

This is an uncharacterized protein from Treponema pallidum (strain Nichols).